Consider the following 234-residue polypeptide: Sugar fermentation stimulation protein A (234 aa).

Positions 201-220 (LLSEAQQRGVEILAYKAELS) form a DNA-binding region, H-T-H motif.

It belongs to the SfsA family.

Functionally, binds to DNA non-specifically. Could be a regulatory factor involved in maltose metabolism. The chain is Sugar fermentation stimulation protein A from Escherichia coli (strain SMS-3-5 / SECEC).